Here is a 458-residue protein sequence, read N- to C-terminus: ATP synthase subunit beta (458 aa).

148–155 (GGAGVGKT) provides a ligand contact to ATP.

It belongs to the ATPase alpha/beta chains family. As to quaternary structure, F-type ATPases have 2 components, CF(1) - the catalytic core - and CF(0) - the membrane proton channel. CF(1) has five subunits: alpha(3), beta(3), gamma(1), delta(1), epsilon(1). CF(0) has three main subunits: a(1), b(2) and c(9-12). The alpha and beta chains form an alternating ring which encloses part of the gamma chain. CF(1) is attached to CF(0) by a central stalk formed by the gamma and epsilon chains, while a peripheral stalk is formed by the delta and b chains.

It localises to the cell inner membrane. The enzyme catalyses ATP + H2O + 4 H(+)(in) = ADP + phosphate + 5 H(+)(out). In terms of biological role, produces ATP from ADP in the presence of a proton gradient across the membrane. The catalytic sites are hosted primarily by the beta subunits. This chain is ATP synthase subunit beta, found in Francisella philomiragia subsp. philomiragia (strain ATCC 25017 / CCUG 19701 / FSC 153 / O#319-036).